A 189-amino-acid polypeptide reads, in one-letter code: UPF0301 protein RF_0044 (189 aa).

Belongs to the UPF0301 (AlgH) family.

This Rickettsia felis (strain ATCC VR-1525 / URRWXCal2) (Rickettsia azadi) protein is UPF0301 protein RF_0044.